A 244-amino-acid polypeptide reads, in one-letter code: 5-oxoprolinase subunit A (244 aa).

This sequence belongs to the LamB/PxpA family. As to quaternary structure, forms a complex composed of PxpA, PxpB and PxpC.

The catalysed reaction is 5-oxo-L-proline + ATP + 2 H2O = L-glutamate + ADP + phosphate + H(+). Catalyzes the cleavage of 5-oxoproline to form L-glutamate coupled to the hydrolysis of ATP to ADP and inorganic phosphate. The chain is 5-oxoprolinase subunit A from Salmonella paratyphi C (strain RKS4594).